Reading from the N-terminus, the 464-residue chain is UDP-N-acetylmuramate--L-alanine ligase (464 aa).

118 to 124 (GTHGKTT) serves as a coordination point for ATP.

Belongs to the MurCDEF family.

The protein localises to the cytoplasm. It carries out the reaction UDP-N-acetyl-alpha-D-muramate + L-alanine + ATP = UDP-N-acetyl-alpha-D-muramoyl-L-alanine + ADP + phosphate + H(+). Its pathway is cell wall biogenesis; peptidoglycan biosynthesis. Its function is as follows. Cell wall formation. The sequence is that of UDP-N-acetylmuramate--L-alanine ligase from Dinoroseobacter shibae (strain DSM 16493 / NCIMB 14021 / DFL 12).